Reading from the N-terminus, the 243-residue chain is Uridylate kinase (243 aa).

ATP is bound at residue 14 to 17; sequence KLSG. Residue Gly57 coordinates UMP. ATP contacts are provided by Gly58 and Arg62. UMP contacts are provided by residues Asp77 and 139–146; that span reads TGRPYFTT. Positions 167, 173, and 176 each coordinate ATP.

Belongs to the UMP kinase family. In terms of assembly, homohexamer.

It localises to the cytoplasm. It carries out the reaction UMP + ATP = UDP + ADP. Its pathway is pyrimidine metabolism; CTP biosynthesis via de novo pathway; UDP from UMP (UMPK route): step 1/1. Its activity is regulated as follows. Inhibited by UTP. Catalyzes the reversible phosphorylation of UMP to UDP. This chain is Uridylate kinase, found in Mycoplasmopsis pulmonis (strain UAB CTIP) (Mycoplasma pulmonis).